The chain runs to 948 residues: Protocadherin alpha-2 (948 aa).

Positions methionine 1–alanine 22 are cleaved as a signal peptide. Residues alanine 23–asparagine 697 lie on the Extracellular side of the membrane. 6 consecutive Cadherin domains span residues glutamine 30 to phenylalanine 133, alanine 157 to phenylalanine 242, alanine 243 to valine 350, serine 351 to phenylalanine 455, alanine 456 to leucine 565, and glycine 588 to alanine 678. Asparagine 257, asparagine 265, asparagine 362, and asparagine 548 each carry an N-linked (GlcNAc...) asparagine glycan. Residues valine 698–tyrosine 718 form a helical membrane-spanning segment. Topologically, residues threonine 719–glutamine 948 are cytoplasmic. The PXXP 1 repeat unit spans residues proline 734–proline 737. The tract at residues proline 734 to proline 892 is 5 X 4 AA repeats of P-X-X-P. Disordered stretches follow at residues arginine 755–asparagine 801, glycine 829–proline 854, and lysine 868–glutamine 948. Positions alanine 783–glycine 795 are enriched in basic and acidic residues. PXXP repeat units lie at residues proline 797–proline 800, proline 830–proline 833, proline 871–proline 874, and proline 889–proline 892. A compositionally biased stretch (basic and acidic residues) spans aspartate 907–lysine 921.

The protein localises to the cell membrane. Functionally, potential calcium-dependent cell-adhesion protein. May be involved in the establishment and maintenance of specific neuronal connections in the brain. The sequence is that of Protocadherin alpha-2 (PCDHA2) from Pan troglodytes (Chimpanzee).